Reading from the N-terminus, the 594-residue chain is UvrABC system protein C (594 aa).

The region spanning 14–91 is the GIY-YIG domain; that stretch reads DQPGCYLMKD…IKKHDPKYNI (78 aa). The UVR domain occupies 196 to 231; sequence KEVRSELETKMYEASEKLEFERAKELRDQIAHIDAI.

The protein belongs to the UvrC family. In terms of assembly, interacts with UvrB in an incision complex.

The protein resides in the cytoplasm. Its function is as follows. The UvrABC repair system catalyzes the recognition and processing of DNA lesions. UvrC both incises the 5' and 3' sides of the lesion. The N-terminal half is responsible for the 3' incision and the C-terminal half is responsible for the 5' incision. This chain is UvrABC system protein C, found in Bacillus cereus (strain Q1).